A 276-amino-acid chain; its full sequence is Omega-amidase NIT2 (276 aa).

The CN hydrolase domain occupies 4–248; that stretch reads FRLSLVQFLV…ETVISADIDL (245 aa). The active-site Proton acceptor is the Glu-43. The active-site Proton donor is the Lys-112. The Nucleophile role is filled by Cys-153.

This sequence belongs to the carbon-nitrogen hydrolase superfamily. NIT1/NIT2 family. In terms of assembly, homodimer.

The protein resides in the cytoplasm. The enzyme catalyses 2-oxoglutaramate + H2O = 2-oxoglutarate + NH4(+). It carries out the reaction 2-oxosuccinamate + H2O = oxaloacetate + NH4(+). Its function is as follows. Has omega-amidase activity. The role of omega-amidase is to remove potentially toxic intermediates by converting 2-oxoglutaramate and 2-oxosuccinamate to biologically useful 2-oxoglutarate and oxaloacetate, respectively. In Xenopus tropicalis (Western clawed frog), this protein is Omega-amidase NIT2 (nit2).